A 146-amino-acid polypeptide reads, in one-letter code: Hemoglobin subunit beta (146 aa).

The 145-residue stretch at 2–146 folds into the Globin domain; that stretch reads HWTAEEKQLI…VAHALARKYH (145 aa). Residues His63 and His92 each contribute to the heme b site.

This sequence belongs to the globin family. As to quaternary structure, heterotetramer of two alpha chains and two beta chains. Red blood cells.

Involved in oxygen transport from the lung to the various peripheral tissues. This chain is Hemoglobin subunit beta (HBB), found in Ciconia ciconia (White stork).